Reading from the N-terminus, the 69-residue chain is UPF0270 protein VCM66_2532 (69 aa).

This sequence belongs to the UPF0270 family.

This Vibrio cholerae serotype O1 (strain M66-2) protein is UPF0270 protein VCM66_2532.